Here is a 128-residue protein sequence, read N- to C-terminus: UPF0102 protein RPB_0420 (128 aa).

Belongs to the UPF0102 family.

This chain is UPF0102 protein RPB_0420, found in Rhodopseudomonas palustris (strain HaA2).